The following is a 460-amino-acid chain: Light-independent protochlorophyllide reductase subunit N (460 aa).

C22, C47, and C107 together coordinate [4Fe-4S] cluster.

This sequence belongs to the BchN/ChlN family. Protochlorophyllide reductase is composed of three subunits; ChlL, ChlN and ChlB. Forms a heterotetramer of two ChlB and two ChlN subunits. The cofactor is [4Fe-4S] cluster.

It localises to the plastid. The protein localises to the cyanelle. It catalyses the reaction chlorophyllide a + oxidized 2[4Fe-4S]-[ferredoxin] + 2 ADP + 2 phosphate = protochlorophyllide a + reduced 2[4Fe-4S]-[ferredoxin] + 2 ATP + 2 H2O. It functions in the pathway porphyrin-containing compound metabolism; chlorophyll biosynthesis (light-independent). In terms of biological role, component of the dark-operative protochlorophyllide reductase (DPOR) that uses Mg-ATP and reduced ferredoxin to reduce ring D of protochlorophyllide (Pchlide) to form chlorophyllide a (Chlide). This reaction is light-independent. The NB-protein (ChlN-ChlB) is the catalytic component of the complex. This chain is Light-independent protochlorophyllide reductase subunit N, found in Cyanophora paradoxa.